The primary structure comprises 303 residues: N-acetyl-D-glucosamine kinase (303 aa).

ATP-binding positions include 4-11 (GFDIGGTK) and 133-140 (GVGGGLVL). Zn(2+)-binding residues include His157, Cys177, Cys179, and Cys184.

This sequence belongs to the ROK (NagC/XylR) family. NagK subfamily.

It carries out the reaction N-acetyl-D-glucosamine + ATP = N-acetyl-D-glucosamine 6-phosphate + ADP + H(+). Its pathway is cell wall biogenesis; peptidoglycan recycling. Its function is as follows. Catalyzes the phosphorylation of N-acetyl-D-glucosamine (GlcNAc) derived from cell-wall degradation, yielding GlcNAc-6-P. This is N-acetyl-D-glucosamine kinase from Salmonella paratyphi B (strain ATCC BAA-1250 / SPB7).